Reading from the N-terminus, the 155-residue chain is D-aminoacyl-tRNA deacylase (155 aa).

The Gly-cisPro motif, important for rejection of L-amino acids signature appears at 137–138; it reads GP.

It belongs to the DTD family. As to quaternary structure, homodimer.

Its subcellular location is the cytoplasm. The enzyme catalyses glycyl-tRNA(Ala) + H2O = tRNA(Ala) + glycine + H(+). It catalyses the reaction a D-aminoacyl-tRNA + H2O = a tRNA + a D-alpha-amino acid + H(+). Functionally, an aminoacyl-tRNA editing enzyme that deacylates mischarged D-aminoacyl-tRNAs. Also deacylates mischarged glycyl-tRNA(Ala), protecting cells against glycine mischarging by AlaRS. Acts via tRNA-based rather than protein-based catalysis; rejects L-amino acids rather than detecting D-amino acids in the active site. By recycling D-aminoacyl-tRNA to D-amino acids and free tRNA molecules, this enzyme counteracts the toxicity associated with the formation of D-aminoacyl-tRNA entities in vivo and helps enforce protein L-homochirality. This chain is D-aminoacyl-tRNA deacylase, found in Geotalea uraniireducens (strain Rf4) (Geobacter uraniireducens).